A 132-amino-acid polypeptide reads, in one-letter code: Small ribosomal subunit protein uS8 (132 aa).

It belongs to the universal ribosomal protein uS8 family. In terms of assembly, part of the 30S ribosomal subunit. Contacts proteins S5 and S12.

One of the primary rRNA binding proteins, it binds directly to 16S rRNA central domain where it helps coordinate assembly of the platform of the 30S subunit. The polypeptide is Small ribosomal subunit protein uS8 (Streptococcus gordonii (strain Challis / ATCC 35105 / BCRC 15272 / CH1 / DL1 / V288)).